The sequence spans 672 residues: MEIQFNYESQEHHLLSDGENKTKIGKPASEEGITAKIEPLTEESSSLRENVLQDSEGREFCEFGDKLNEKDQNVFKRRPHNCDEYGQSFVWNTGLFRHRKTHCEKPYECDKCGKAFSVSSALVLHQRIHTGEKPYSCNWCIKSFSRSSDLIKHQRVHTGEKPYKCDECGKAFSQSSDLIIHQRIHTGEKPYQCSHCSKSFSQRSDLVKHQRIHTGEKPYTCNQCNKHFSQSSDVIKHQRIHTGEKPYKCDVCAKAFSQSSDLILHQRIHTGEKPYPCNQCSKSFSQNSDLIKHRRIHTGEKPYKCNECGKAFNQSSVLILHQRIHTGEKPYPCDQCSKTFSRLSDLINHQRIHTGEKPYPCNQCNKMFSRRSDLVKHHRIHTGEKPYECDECGKTFSQSSNLILHQRIHTGEKPYPCSDCTKSFSRRSDLVKHQRIHTGEKPYACNQCDKSFSQSSDLTKHQRVHSGEKPYHCNSCEKAFSQSSDLILHQRIHTGEKPYLCTQCSKSFSQNSDLIKHQRIHTGEKPYKCSECRKAFSQCSALTLHQRIHTGEKPNPCNECGKSFSRHSDLINHQKIHTGEKPYKCDACGKAFSTCTDLIEHQKIHAGEKPYRCVQCSRSFSQLSELTIHEEVHCGEDSQNVMNVRKPLVYTSTLFSTRDTVPGKNLMNAVDY.

The disordered stretch occupies residues 1 to 29 (MEIQFNYESQEHHLLSDGENKTKIGKPAS). A compositionally biased stretch (basic and acidic residues) spans 9-22 (SQEHHLLSDGENKT). A C2H2-type 1; degenerate zinc finger spans residues 80-102 (HNCDEYGQSFVWNTGLFRHRKTH). 19 consecutive C2H2-type zinc fingers follow at residues 107 to 129 (YECD…QRIH), 135 to 157 (YSCN…QRVH), 163 to 185 (YKCD…QRIH), 191 to 213 (YQCS…QRIH), 219 to 241 (YTCN…QRIH), 247 to 269 (YKCD…QRIH), 275 to 297 (YPCN…RRIH), 303 to 325 (YKCN…QRIH), 331 to 353 (YPCD…QRIH), 359 to 381 (YPCN…HRIH), 387 to 409 (YECD…QRIH), 415 to 437 (YPCS…QRIH), 443 to 465 (YACN…QRVH), 471 to 493 (YHCN…QRIH), 499 to 521 (YLCT…QRIH), 527 to 549 (YKCS…QRIH), 555 to 577 (NPCN…QKIH), 583 to 605 (YKCD…QKIH), and 611 to 633 (YRCV…EEVH).

Belongs to the krueppel C2H2-type zinc-finger protein family.

It is found in the nucleus. Its function is as follows. May be involved in transcriptional regulation. The protein is Zinc finger protein 271 (ZNF271) of Pongo abelii (Sumatran orangutan).